We begin with the raw amino-acid sequence, 398 residues long: Homeobox protein knotted-1-like 1 (398 aa).

3 disordered regions span residues 20 to 61 (SPIS…HHHQ), 78 to 102 (NCFR…ASSS), and 241 to 273 (LNNP…EIDP). Residues 23-56 (SSSNKNDNTSDTNNNNNNNNSSNYGPGYNNTNNN) show a composition bias toward low complexity. Residues 87 to 102 (PNNNNNPSVKSEASSS) are compositionally biased toward polar residues. Residues 279–299 (ELKNHLLKKYSGYLSSLKQEL) enclose the ELK domain. The homeobox; TALE-type DNA-binding region spans 300–363 (SKKKKKGKLP…NQRKRHWKPS (64 aa)).

It belongs to the TALE/KNOX homeobox family. May form heterodimeric complex with the TALE/BELL proteins BEL1, BLH2, BLH8/PNF and BLH9/PNY. Interacts with OFP1, OFP2, OFP4, OFP6 and OFP12. Interacts with CCT7 and CCT8. Interacts with KNATM-B. Binds to AGO10/PNH. Interacts with BZIP30. As to expression, expressed in the vegetative meristem. Present in the base of flower primordia.

The protein resides in the nucleus. Its function is as follows. May play a role in meristem function, and may be involved in maintaining cells in an undifferentiated, meristematic state, and its expression disappears at the same time the shoot apex undergoes the transition from vegetative to reproductive development. Positive regulator of LATERAL ORGAN BOUNDARIES (LOB). Probably binds to the DNA sequence 5'-TGAC-3'. Able to traffic from the L1 to the L2/L3 layers of the meristem, presumably through plasmodesmata. In Arabidopsis thaliana (Mouse-ear cress), this protein is Homeobox protein knotted-1-like 1 (KNAT1).